The primary structure comprises 204 residues: Large ribosomal subunit protein eL15 (204 aa).

The disordered stretch occupies residues 155-204 (VHKHREQRGLTSAGRKSRGLGKGWRFSATRGGSQAKNWKRKNTKVFHRKR). Positions 191–204 (NWKRKNTKVFHRKR) are enriched in basic residues.

It belongs to the eukaryotic ribosomal protein eL15 family.

This Caenorhabditis elegans protein is Large ribosomal subunit protein eL15 (rpl-15).